Reading from the N-terminus, the 241-residue chain is Proteasome subunit beta type-6 (241 aa).

The propeptide occupies 1–19; sequence MATIASEYSSEASNTPIEH.

The protein belongs to the peptidase T1B family. The 26S proteasome consists of a 20S proteasome core and two 19S regulatory subunits. The 20S proteasome core is composed of 28 subunits that are arranged in four stacked rings, resulting in a barrel-shaped structure. The two end rings are each formed by seven alpha subunits, and the two central rings are each formed by seven beta subunits. The catalytic chamber with the active sites is on the inside of the barrel.

It localises to the cytoplasm. The protein resides in the nucleus. Functionally, non-catalytic component of the proteasome which degrades poly-ubiquitinated proteins in the cytoplasm and in the nucleus. It is essential for the regulated turnover of proteins and for the removal of misfolded proteins. The proteasome is a multicatalytic proteinase complex that is characterized by its ability to cleave peptides with Arg, Phe, Tyr, Leu, and Glu adjacent to the leaving group at neutral or slightly basic pH. It has an ATP-dependent proteolytic activity. The polypeptide is Proteasome subunit beta type-6 (PRE7) (Saccharomyces cerevisiae (strain ATCC 204508 / S288c) (Baker's yeast)).